The primary structure comprises 388 residues: tRNA (guanine-N(7)-)-methyltransferase non-catalytic subunit (388 aa).

WD repeat units follow at residues 58-102 (VEKR…KGDI), 112-151 (VVPK…AIEM), 153-194 (GAIS…DSFF), and 196-234 (GHTE…APRR). Residues 365-388 (EKKKRRLNEDINGDDGEGPGPSNS) are disordered.

This sequence belongs to the WD repeat TRM82 family. As to quaternary structure, forms a heterodimer with the catalytic subunit.

Its subcellular location is the nucleus. Its pathway is tRNA modification; N(7)-methylguanine-tRNA biosynthesis. Its function is as follows. Required for the formation of N(7)-methylguanine at position 46 (m7G46) in tRNA. In the complex, it is required to stabilize and induce conformational changes of the catalytic subunit. In Caenorhabditis elegans, this protein is tRNA (guanine-N(7)-)-methyltransferase non-catalytic subunit.